We begin with the raw amino-acid sequence, 176 residues long: DELTA-stichotoxin-She4a (176 aa).

The plays an important role in the hemolytic activity stretch occupies residues 2–11 (ELAGTIIDGA). Residues 10 to 29 (GASLTFEVLDKVLGELGKVS) form an N-terminal region region. Phosphocholine-binding residues include Ser53, Val86, Ser104, Pro106, Tyr132, Tyr136, and Tyr137. The tract at residues 104-119 (SVPFDYNWYSNWWDVK) is trp-rich region, which is important for the binding to lipid membrane. The Cell attachment site motif lies at 142-144 (RGD).

As to quaternary structure, octamer or nonamer in membranes. Monomer in the soluble state.

Its subcellular location is the secreted. The protein localises to the nematocyst. It is found in the target cell membrane. Functionally, pore-forming protein that forms cations-selective hydrophilic pores of around 1 nm and causes cardiac stimulation and cytolysis. Pore formation is a multi-step process that involves specific recognition of membrane sphingomyelin (but neither cholesterol nor phosphatidylcholine) using aromatic rich region and adjacent phosphocholine (POC) binding site, firm binding to the membrane (mainly driven by hydrophobic interactions) accompanied by the transfer of the N-terminal region to the lipid-water interface and finally pore formation after oligomerization of monomers. Cytolytic effects include red blood cells hemolysis, platelet aggregation and lysis, cytotoxic and cytostatic effects on fibroblasts. Lethality in mammals has been ascribed to severe vasospasm of coronary vessels, cardiac arrhythmia, and inotropic effects. The chain is DELTA-stichotoxin-She4a from Stichodactyla helianthus (Sun anemone).